A 184-amino-acid chain; its full sequence is MSVKNAMTADFLRSAYGGESMAHMRYLIWGEEAENSNYPNIGRLFKAIAYSEHIHAKNHFNVLKEDLYDSSVVAGAVFGSTNLIDNLQGAINGELHEIKQMYPVYLETARYQEEKEAERTFHYALEAEKIHAKLFQDAQDSAKENKDINIGKVYICPVCGFTTLDENIEQCPICGVKKDKFQAF.

The 145-residue stretch at Ser2–Lys146 folds into the Ferritin-like diiron domain. Fe(3+)-binding residues include Glu19, Glu52, Glu94, Glu97, Glu128, His131, Cys156, Cys159, Cys171, and Cys174. The Rubredoxin-like domain occupies Gly151–Phe184.

It depends on Fe(3+) as a cofactor.

The catalysed reaction is H2O2 + NADH + H(+) = NAD(+) + 2 H2O. Rubredoxin (Rd) increases the NADH consumption rate by serving as an intermediary electron-transfer shuttle between NROR and Rbr2. Functionally, functions as the terminal component of an NADH peroxidase (NADH:H(2)O(2) oxidoreductase) when using NADH:rubredoxin oxidoreductase (NROR) as the electron transport intermediary from NADH to Rbr2. This Clostridium acetobutylicum (strain ATCC 824 / DSM 792 / JCM 1419 / IAM 19013 / LMG 5710 / NBRC 13948 / NRRL B-527 / VKM B-1787 / 2291 / W) protein is Rubrerythrin-2 (rbr2).